A 96-amino-acid chain; its full sequence is Protein C4 (96 aa).

A lipid anchor (N-myristoyl glycine; by host) is attached at glycine 2. A disordered region spans residues 66–96; that stretch reads STDDLQGEDSRQPMTLTPRQLTQDVSRRLLM. A compositionally biased stretch (polar residues) spans 77–89; the sequence is QPMTLTPRQLTQD.

This sequence belongs to the geminiviridae protein AC4/C4 family.

The protein resides in the host cell membrane. Its function is as follows. Pathogenicity determinant. May act as a suppressor of RNA-mediated gene silencing, also known as post-transcriptional gene silencing (PTGS), a mechanism of plant viral defense that limits the accumulation of viral RNAs. In Solanum lycopersicum (Tomato), this protein is Protein C4.